Reading from the N-terminus, the 187-residue chain is uncharacterized protein (187 aa).

The helical transmembrane segment at 3–23 (AIIIFLILFIVGVLIGVGVYY) threads the bilayer.

It localises to the membrane. This is an uncharacterized protein from Methanocaldococcus jannaschii (strain ATCC 43067 / DSM 2661 / JAL-1 / JCM 10045 / NBRC 100440) (Methanococcus jannaschii).